A 406-amino-acid chain; its full sequence is 4-hydroxy-3-methylbut-2-en-1-yl diphosphate synthase (ferredoxin) (406 aa).

[4Fe-4S] cluster contacts are provided by Cys-314, Cys-317, Cys-348, and Glu-355.

The protein belongs to the IspG family. Requires [4Fe-4S] cluster as cofactor.

It catalyses the reaction (2E)-4-hydroxy-3-methylbut-2-enyl diphosphate + 2 oxidized [2Fe-2S]-[ferredoxin] + H2O = 2-C-methyl-D-erythritol 2,4-cyclic diphosphate + 2 reduced [2Fe-2S]-[ferredoxin] + H(+). Its pathway is isoprenoid biosynthesis; isopentenyl diphosphate biosynthesis via DXP pathway; isopentenyl diphosphate from 1-deoxy-D-xylulose 5-phosphate: step 5/6. Its function is as follows. Converts 2C-methyl-D-erythritol 2,4-cyclodiphosphate (ME-2,4cPP) into 1-hydroxy-2-methyl-2-(E)-butenyl 4-diphosphate. The chain is 4-hydroxy-3-methylbut-2-en-1-yl diphosphate synthase (ferredoxin) from Prochlorococcus marinus (strain MIT 9313).